Consider the following 1043-residue polypeptide: Polycomb protein Pcl (1043 aa).

Disordered stretches follow at residues 1 to 34 (MMNNHFHLQHDHPPQNVAHPFMQQPSTAVPSAPP), 271 to 302 (PDSTTTTPQTPPTTPEAMSSPGKSSPSPPLLA), 317 to 346 (FKTVEAAPPTPPTPPSPPPPPPAPPVAAPS), and 395 to 422 (KLRKLGGGSSITAGGGGASTTESTNTSP). Over residues 25 to 34 (PSTAVPSAPP) the composition is skewed to low complexity. Residues 324-344 (PPTPPTPPSPPPPPPAPPVAA) show a composition bias toward pro residues. Positions 349 to 404 (VTYALQEDVFIKCNDGRFYLGTIIDQTSDQYLIRFDDQSEQWCEPDKLRKLGGGSS) constitute a Tudor domain. A compositionally biased stretch (gly residues) spans 399–412 (LGGGSSITAGGGGA). 2 consecutive PHD-type zinc fingers follow at residues 424-472 (GPMC…CAKP) and 512-560 (QIYC…VFCC). Over residues 737-757 (AKKQAAQKADKHDELPLKPDL) the composition is skewed to basic and acidic residues. 2 disordered regions span residues 737–819 (AKKQ…TSSL) and 931–985 (AKDL…PGHS). Over residues 783–792 (SRKRKAFRLS) the composition is skewed to basic residues. Over residues 793–804 (KRYDNSRNHCDL) the composition is skewed to basic and acidic residues. Phosphoserine occurs at positions 805 and 806. Residues 807–819 (DENSSSSRGTSSL) are compositionally biased toward low complexity. Residues 945–954 (THGRLLRQRP) show a composition bias toward basic residues. A compositionally biased stretch (low complexity) spans 955–977 (QKQSPSQSRRNSTSSTATSSSSN).

Belongs to the Polycomblike family. As to quaternary structure, component of a form of the Esc/E(z) complex present specifically during early embryogenesis which is composed of Caf1-55, esc, E(z), Su(z)12, Pcl and HDAC1/Rpd3. This complex is distinct from the PRC1 complex, which contains many other PcG proteins like Pc, Ph, Psc, Su(z)2. The two complexes however cooperate and interact together during the first 3 hours of development to establish PcG silencing. Interacts with corto in vitro.

It localises to the nucleus. It is found in the chromosome. Its function is as follows. Polycomb group (PcG) protein. While PcG proteins are generally required to maintain the transcriptionally repressive state of homeotic genes throughout development, this protein is specifically required during the first 6 hours of embryogenesis to establish the repressed state. Component of the Esc/E(z) complex, which methylates 'Lys-9' and 'Lys-27' residues of histone H3, leading to transcriptional repression of the affected target gene. The Esc/E(z) complex is necessary but not sufficient for the repression of homeotic target genes, suggesting that the recruitment of the distinct PRC1 complex is also required. Required for the correct spatial expression of the homeotic genes of the Antennapedia and Bithorax complexes. The polypeptide is Polycomb protein Pcl (Pcl) (Drosophila melanogaster (Fruit fly)).